Reading from the N-terminus, the 83-residue chain is Exodeoxyribonuclease 7 small subunit (83 aa).

This sequence belongs to the XseB family. Heterooligomer composed of large and small subunits.

Its subcellular location is the cytoplasm. It carries out the reaction Exonucleolytic cleavage in either 5'- to 3'- or 3'- to 5'-direction to yield nucleoside 5'-phosphates.. Bidirectionally degrades single-stranded DNA into large acid-insoluble oligonucleotides, which are then degraded further into small acid-soluble oligonucleotides. The polypeptide is Exodeoxyribonuclease 7 small subunit (Nitrobacter hamburgensis (strain DSM 10229 / NCIMB 13809 / X14)).